The following is a 257-amino-acid chain: Imidazole glycerol phosphate synthase subunit HisF (257 aa).

Residues Asp11 and Asp130 contribute to the active site.

It belongs to the HisA/HisF family. Heterodimer of HisH and HisF.

The protein localises to the cytoplasm. It catalyses the reaction 5-[(5-phospho-1-deoxy-D-ribulos-1-ylimino)methylamino]-1-(5-phospho-beta-D-ribosyl)imidazole-4-carboxamide + L-glutamine = D-erythro-1-(imidazol-4-yl)glycerol 3-phosphate + 5-amino-1-(5-phospho-beta-D-ribosyl)imidazole-4-carboxamide + L-glutamate + H(+). It functions in the pathway amino-acid biosynthesis; L-histidine biosynthesis; L-histidine from 5-phospho-alpha-D-ribose 1-diphosphate: step 5/9. In terms of biological role, IGPS catalyzes the conversion of PRFAR and glutamine to IGP, AICAR and glutamate. The HisF subunit catalyzes the cyclization activity that produces IGP and AICAR from PRFAR using the ammonia provided by the HisH subunit. This chain is Imidazole glycerol phosphate synthase subunit HisF, found in Proteus mirabilis (strain HI4320).